Here is a 240-residue protein sequence, read N- to C-terminus: Caffeoyl-CoA O-methyltransferase 5 (240 aa).

K14 contacts substrate. S-adenosyl-L-methionine contacts are provided by residues T56, E78, 80 to 81 (GV), S86, D104, and A133. D156 contributes to the substrate binding site. D156 is a binding site for a divalent metal cation. D158 contributes to the S-adenosyl-L-methionine binding site. A divalent metal cation contacts are provided by D182 and N183. N187 contacts substrate.

Belongs to the class I-like SAM-binding methyltransferase superfamily. Cation-dependent O-methyltransferase family. CCoAMT subfamily. Mg(2+) serves as cofactor. Expression steadily increases from the bottom to the top of the plant.

It carries out the reaction (E)-caffeoyl-CoA + S-adenosyl-L-methionine = (E)-feruloyl-CoA + S-adenosyl-L-homocysteine + H(+). Its pathway is aromatic compound metabolism; phenylpropanoid biosynthesis. Its function is as follows. Methylates caffeoyl-CoA to feruloyl-CoA and 5-hydroxyferuloyl-CoA to sinapoyl-CoA. Plays a role in the synthesis of feruloylated polysaccharides. Involved in the reinforcement of the plant cell wall. Also involved in the responding to wounding or pathogen challenge by the increased formation of cell wall-bound ferulic acid polymers. Methylates 5-hydroxyferulolyl-CoA more efficiently than caffeoyl-CoA. This is Caffeoyl-CoA O-methyltransferase 5 (CCOAOMT5) from Nicotiana tabacum (Common tobacco).